Reading from the N-terminus, the 121-residue chain is Inner membrane protein YhaH (121 aa).

The Periplasmic segment spans residues 1 to 23 (MDWYLKVLKNYVGFRGRARRKEY). The helical transmembrane segment at 24–44 (WMFILVNIIFTFVLGLLDKML) threads the bilayer. Residues 45-49 (GWQRA) lie on the Cytoplasmic side of the membrane. The helical transmembrane segment at 50-70 (GGEGILTTIYGILVFLPWWAV) threads the bilayer. Topologically, residues 71 to 80 (QFRRLHDTDR) are periplasmic. The helical transmembrane segment at 81-101 (SAWWALLFLIPFIGWLIIIVF) threads the bilayer. Topologically, residues 102–121 (NCQAGTPGENRFGPDPKLEP) are cytoplasmic.

It to E.coli YhaI.

The protein localises to the cell inner membrane. The protein is Inner membrane protein YhaH (yhaH) of Escherichia coli O157:H7.